The following is a 279-amino-acid chain: Methyltransferase prhM (279 aa).

S-adenosyl-L-methionine-binding positions include Asp124–Ile125 and Asp152–Val153.

Belongs to the class I-like SAM-binding methyltransferase superfamily.

Its pathway is secondary metabolite biosynthesis; terpenoid biosynthesis. Methyltransferase; part of the gene cluster that mediates the biosynthesis of paraherquonin, a meroterpenoid with a unique, highly congested hexacyclic molecular architecture. The first step of the pathway is the synthesis of 3,5-dimethylorsellinic acid (DMOA) by the polyketide synthase prhL. Synthesis of DMOA is followed by farnesylation by the prenyltransferase prhE, methylesterification by the methyl-transferase prhM, epoxidation of the prenyl chain by the flavin-dependent monooxygenase prhF, and cyclization of the farnesyl moiety by the terpene cyclase prhH, to yield the tetracyclic intermediate, protoaustinoid A. The short chain dehydrogenase prhI then oxidizes the C-3 alcohol group of the terpene cyclase product to transform protoaustinoid A into protoaustinoid B. The FAD-binding monooxygenase prhJ catalyzes the oxidation of protoaustinoid B into preaustinoid A which is further oxidized into preaustinoid A1 by FAD-binding monooxygenase phrK. Finally, prhA leads to berkeleydione via the berkeleyone B intermediate. PrhA is a multifunctional dioxygenase that first desaturates at C5-C6 to form berkeleyone B, followed by rearrangement of the A/B-ring to form the cycloheptadiene moiety in berkeleydione. Berkeleydione serves as the key intermediate for the biosynthesis of paraherquonin as well as many other meroterpenoids. The cytochrome P450 monooxygenases prhB, prhD, and prhN, as well as the isomerase prhC, are probably involved in the late stage of paraherquonin biosynthesis, after the production of berkeleydione. Especially prhC might be a multifunctional enzyme that catalyzes the D-ring expansion via intramolecular methoxy rearrangement, as well as the hydrolysis of the expanded D-ring. The chain is Methyltransferase prhM from Penicillium brasilianum.